Here is a 588-residue protein sequence, read N- to C-terminus: MEVAAAVGVIASVPILYKAIRPRIKTSVECWFCRKSTKVEYQQRNSFTCPSCEQYNGFTEDGDYNRRIPGQAWTTPKRYCEPGKMQSEKPSTFLDRFGGVNMSPKASNGLCSECNLGQEIIMNKVAEFEPIDEDRWNEELEDYRYKLERMYQLCPRCTIQVHGKLEEDKKKYSYLLKVKYKLKHAIGSTLREVMNNQKRSRRFFFAGGSTCEALHFGCLISSIILFLANIDFLQQDAGASLINLPKALQDILPEVYKYSFVINFLIFTTHLIAAFNNKCRVTLPDLLLPILLILAMLTVLTSSDNLSQDVALVRGACASFSTILSMAVTLLPRKKLHKKRPNKIVSSAFSVASTPISQCSSQNSRNASLLDHDHTILRRSPHTPSASPPAMNSSPPLLREITNGPVWSAMRSRENKENMQSYQTKPNNHVESMDWDDSESMAAQSVAQSTRSSHFKPGLLSRNINERMTAQQLTPSVANLNLDTRSVDSPSIFSRQHRQMAQQQNHTPTRSLFGPPRSMVASQYDRSHYMAPEAHTRPGSVFTSVSQQDGHSTVSGAWQCRVIGILFALVFIVLIMQIGLFYVLFTRN.

At M1 to E212 the chain is on the nuclear side. The chain crosses the membrane as a helical span at residues A213–L233. Residues Q234–E254 lie on the Perinuclear space side of the membrane. A helical transmembrane segment spans residues V255–F275. The Nuclear segment spans residues N276–R280. The helical transmembrane segment at V281–T301 threads the bilayer. Residues S302–D309 lie on the Perinuclear space side of the membrane. A helical membrane pass occupies residues V310–L330. Residues L331 to G564 lie on the Nuclear side of the membrane. The segment at R378–P457 is disordered. The segment covering P384–P396 has biased composition (low complexity). Composition is skewed to polar residues over residues N418 to V430 and M441 to S452. The chain crosses the membrane as a helical span at residues I565–F585. Residues T586 to N588 are Perinuclear space-facing.

Belongs to the TMEM201 family.

The protein localises to the nucleus inner membrane. Functionally, plays a role in nuclear migration in hypodermal cells. The polypeptide is Transmembrane protein 201 homolog (Caenorhabditis elegans).